A 406-amino-acid polypeptide reads, in one-letter code: Tryptophan synthase beta chain (406 aa).

Lys99 bears the N6-(pyridoxal phosphate)lysine mark.

It belongs to the TrpB family. In terms of assembly, tetramer of two alpha and two beta chains. It depends on pyridoxal 5'-phosphate as a cofactor.

It carries out the reaction (1S,2R)-1-C-(indol-3-yl)glycerol 3-phosphate + L-serine = D-glyceraldehyde 3-phosphate + L-tryptophan + H2O. Its pathway is amino-acid biosynthesis; L-tryptophan biosynthesis; L-tryptophan from chorismate: step 5/5. Its function is as follows. The beta subunit is responsible for the synthesis of L-tryptophan from indole and L-serine. This chain is Tryptophan synthase beta chain, found in Sinorhizobium fredii (strain NBRC 101917 / NGR234).